Consider the following 227-residue polypeptide: Cytochrome c oxidase subunit 2 (227 aa).

The Mitochondrial intermembrane segment spans residues M1–S14. A helical transmembrane segment spans residues P15–M45. Residues L46–Q59 lie on the Mitochondrial matrix side of the membrane. The helical transmembrane segment at E60–M87 threads the bilayer. Residues D88–L227 are Mitochondrial intermembrane-facing. 6 residues coordinate Cu cation: H161, C196, E198, C200, H204, and M207. E198 contacts Mg(2+).

Belongs to the cytochrome c oxidase subunit 2 family. As to quaternary structure, component of the cytochrome c oxidase (complex IV, CIV), a multisubunit enzyme composed of 14 subunits. The complex is composed of a catalytic core of 3 subunits MT-CO1, MT-CO2 and MT-CO3, encoded in the mitochondrial DNA, and 11 supernumerary subunits COX4I, COX5A, COX5B, COX6A, COX6B, COX6C, COX7A, COX7B, COX7C, COX8 and NDUFA4, which are encoded in the nuclear genome. The complex exists as a monomer or a dimer and forms supercomplexes (SCs) in the inner mitochondrial membrane with NADH-ubiquinone oxidoreductase (complex I, CI) and ubiquinol-cytochrome c oxidoreductase (cytochrome b-c1 complex, complex III, CIII), resulting in different assemblies (supercomplex SCI(1)III(2)IV(1) and megacomplex MCI(2)III(2)IV(2)). Found in a complex with TMEM177, COA6, COX18, COX20, SCO1 and SCO2. Interacts with TMEM177 in a COX20-dependent manner. Interacts with COX20. Interacts with COX16. The cofactor is Cu cation.

It is found in the mitochondrion inner membrane. The catalysed reaction is 4 Fe(II)-[cytochrome c] + O2 + 8 H(+)(in) = 4 Fe(III)-[cytochrome c] + 2 H2O + 4 H(+)(out). In terms of biological role, component of the cytochrome c oxidase, the last enzyme in the mitochondrial electron transport chain which drives oxidative phosphorylation. The respiratory chain contains 3 multisubunit complexes succinate dehydrogenase (complex II, CII), ubiquinol-cytochrome c oxidoreductase (cytochrome b-c1 complex, complex III, CIII) and cytochrome c oxidase (complex IV, CIV), that cooperate to transfer electrons derived from NADH and succinate to molecular oxygen, creating an electrochemical gradient over the inner membrane that drives transmembrane transport and the ATP synthase. Cytochrome c oxidase is the component of the respiratory chain that catalyzes the reduction of oxygen to water. Electrons originating from reduced cytochrome c in the intermembrane space (IMS) are transferred via the dinuclear copper A center (CU(A)) of subunit 2 and heme A of subunit 1 to the active site in subunit 1, a binuclear center (BNC) formed by heme A3 and copper B (CU(B)). The BNC reduces molecular oxygen to 2 water molecules using 4 electrons from cytochrome c in the IMS and 4 protons from the mitochondrial matrix. In Phyllostomus hastatus (Greater spear-nosed bat), this protein is Cytochrome c oxidase subunit 2 (MT-CO2).